We begin with the raw amino-acid sequence, 1798 residues long: Non-reducing polyketide synthase nscA (1798 aa).

The interval 25–256 (RRLDQHSKDR…PLPVYDGLCH (232 aa)) is N-terminal acylcarrier protein transacylase domain (SAT). The Ketosynthase family 3 (KS3) domain maps to 392–825 (SSKLAIVGMA…GGNTTLLLED (434 aa)). The disordered stretch occupies residues 436-455 (NTHYDPTGKTENTTQTPYGN). The span at 444-453 (KTENTTQTPY) shows a compositional bias: polar residues. Catalysis depends on for beta-ketoacyl synthase activity residues Cys-565, His-700, and His-743. The segment at 931-1230 (FTGQGAYYHG…PSASAMSSCR (300 aa)) is malonyl-CoA:ACP transacylase (MAT) domain. The interval 1322-1458 (HQITAETVEA…AMIRFEDPVA (137 aa)) is N-terminal hotdog fold. One can recognise a PKS/mFAS DH domain in the interval 1322–1632 (HQITAETVEA…FRRVPRLLMD (311 aa)). The active-site Proton acceptor; for dehydratase activity is the His-1354. Residues 1390 to 1628 (HMNLTDVEVL…GMIRFRRVPR (239 aa)) form a product template (PT) domain region. The C-terminal hotdog fold stretch occupies residues 1486–1632 (ASRLSKPLAY…FRRVPRLLMD (147 aa)). The Proton donor; for dehydratase activity role is filled by Asp-1543. The disordered stretch occupies residues 1685-1719 (MASKAPEPAPLLATSSESSTPKESPIVTPAESERA). The segment covering 1698–1709 (TSSESSTPKESP) has biased composition (low complexity). In terms of domain architecture, Carrier spans 1721–1798 (PVDNNMISQC…EMTAWIEEYC (78 aa)). At Ser-1758 the chain carries O-(pantetheine 4'-phosphoryl)serine.

The cofactor is pantetheine 4'-phosphate.

It participates in secondary metabolite biosynthesis. Its function is as follows. Non-reducing polyketide synthase; part of the gene cluster that mediates the biosynthesis of neosartoricin B, a prenylated anthracenone that probably exhibits T-cell antiproliferative activity, suggestive of a physiological role as an immunosuppressive agent. The non-reducing polyketide synthase nscA probably synthesizes and cyclizes the decaketide backbone. The hydrolase nscB then mediates the product release through hydrolysis followed by spontaneous decarboxylation. The prenyltransferase nscD catalyzes the addition of the dimethylallyl group to the aromatic C5. The FAD-dependent monooxygenase nscC is then responsible for the stereospecific hydroxylation at C2. Neosartoricin B can be converted into two additional compounds neosartoricins C and D. Neosartoricin C is a spirocyclic compound that is cyclized through the attack of C3 hydroxyl on C14, followed by dehydration. On the other hand, neosartoricin D is a further cyclized compound in which attack of C2 on C14 in neosartoricin C results in the formation of the acetal-containing dioxabicyclo-octanone ring. Both of these compounds are novel and possibly represent related metabolites of the gene cluster. In Arthroderma benhamiae (strain ATCC MYA-4681 / CBS 112371) (Trichophyton mentagrophytes), this protein is Non-reducing polyketide synthase nscA.